Here is a 425-residue protein sequence, read N- to C-terminus: Serine--tRNA ligase (425 aa).

Residue Thr230–Glu232 coordinates L-serine. Position 261–263 (Arg261–Glu263) interacts with ATP. Glu284 contributes to the L-serine binding site. An ATP-binding site is contributed by Glu348–Ser351. Position 384 (Ser384) interacts with L-serine.

This sequence belongs to the class-II aminoacyl-tRNA synthetase family. Type-1 seryl-tRNA synthetase subfamily. In terms of assembly, homodimer. The tRNA molecule binds across the dimer.

The protein localises to the cytoplasm. The enzyme catalyses tRNA(Ser) + L-serine + ATP = L-seryl-tRNA(Ser) + AMP + diphosphate + H(+). The catalysed reaction is tRNA(Sec) + L-serine + ATP = L-seryl-tRNA(Sec) + AMP + diphosphate + H(+). The protein operates within aminoacyl-tRNA biosynthesis; selenocysteinyl-tRNA(Sec) biosynthesis; L-seryl-tRNA(Sec) from L-serine and tRNA(Sec): step 1/1. Its function is as follows. Catalyzes the attachment of serine to tRNA(Ser). Is also able to aminoacylate tRNA(Sec) with serine, to form the misacylated tRNA L-seryl-tRNA(Sec), which will be further converted into selenocysteinyl-tRNA(Sec). The sequence is that of Serine--tRNA ligase from Streptococcus agalactiae serotype Ia (strain ATCC 27591 / A909 / CDC SS700).